The following is a 398-amino-acid chain: Succinate--CoA ligase [ADP-forming] subunit beta (398 aa).

In terms of domain architecture, ATP-grasp spans 9-254 (KRLLHEYGAP…TSEEDPKEIE (246 aa)). Residues Lys46, 53–55 (GRG), Glu109, Ala112, and Glu117 contribute to the ATP site. Positions 209 and 223 each coordinate Mg(2+). Substrate contacts are provided by residues Asn274 and 331–333 (GIM).

This sequence belongs to the succinate/malate CoA ligase beta subunit family. In terms of assembly, heterotetramer of two alpha and two beta subunits. The cofactor is Mg(2+).

The catalysed reaction is succinate + ATP + CoA = succinyl-CoA + ADP + phosphate. It carries out the reaction GTP + succinate + CoA = succinyl-CoA + GDP + phosphate. The protein operates within carbohydrate metabolism; tricarboxylic acid cycle; succinate from succinyl-CoA (ligase route): step 1/1. Its function is as follows. Succinyl-CoA synthetase functions in the citric acid cycle (TCA), coupling the hydrolysis of succinyl-CoA to the synthesis of either ATP or GTP and thus represents the only step of substrate-level phosphorylation in the TCA. The beta subunit provides nucleotide specificity of the enzyme and binds the substrate succinate, while the binding sites for coenzyme A and phosphate are found in the alpha subunit. The chain is Succinate--CoA ligase [ADP-forming] subunit beta from Bartonella henselae (strain ATCC 49882 / DSM 28221 / CCUG 30454 / Houston 1) (Rochalimaea henselae).